The following is a 177-amino-acid chain: ATP synthase subunit delta (177 aa).

This sequence belongs to the ATPase delta chain family. As to quaternary structure, F-type ATPases have 2 components, F(1) - the catalytic core - and F(0) - the membrane proton channel. F(1) has five subunits: alpha(3), beta(3), gamma(1), delta(1), epsilon(1). F(0) has three main subunits: a(1), b(2) and c(10-14). The alpha and beta chains form an alternating ring which encloses part of the gamma chain. F(1) is attached to F(0) by a central stalk formed by the gamma and epsilon chains, while a peripheral stalk is formed by the delta and b chains.

The protein localises to the cell inner membrane. Functionally, f(1)F(0) ATP synthase produces ATP from ADP in the presence of a proton or sodium gradient. F-type ATPases consist of two structural domains, F(1) containing the extramembraneous catalytic core and F(0) containing the membrane proton channel, linked together by a central stalk and a peripheral stalk. During catalysis, ATP synthesis in the catalytic domain of F(1) is coupled via a rotary mechanism of the central stalk subunits to proton translocation. Its function is as follows. This protein is part of the stalk that links CF(0) to CF(1). It either transmits conformational changes from CF(0) to CF(1) or is implicated in proton conduction. In Tolumonas auensis (strain DSM 9187 / NBRC 110442 / TA 4), this protein is ATP synthase subunit delta.